The chain runs to 222 residues: Pleckstrin homology domain-containing family B member 2 (222 aa).

Residues 2–109 (AFVKSGWLLR…WKFTLQDSRT (108 aa)) form the PH domain. K20 serves as a coordination point for a 1,2-diacyl-sn-glycero-3-phospho-L-serine.

The protein resides in the recycling endosome membrane. Functionally, involved in retrograde transport of recycling endosomes. The sequence is that of Pleckstrin homology domain-containing family B member 2 (PLEKHB2) from Homo sapiens (Human).